Here is a 51-residue protein sequence, read N- to C-terminus: Large ribosomal subunit protein eL39 (51 aa).

Belongs to the eukaryotic ribosomal protein eL39 family.

The protein is Large ribosomal subunit protein eL39 of Thermococcus onnurineus (strain NA1).